Here is a 615-residue protein sequence, read N- to C-terminus: ATP-dependent zinc metalloprotease FtsH 2 (615 aa).

The Cytoplasmic portion of the chain corresponds to 1-7; that stretch reads MNEPNRN. The helical transmembrane segment at 8 to 28 threads the bilayer; sequence FFWIFFLILGIFWLQSVWFGS. The Periplasmic segment spans residues 29-99; sequence RTVQQIPYSQ…VTYRREIENT (71 aa). Residues 100 to 120 form a helical membrane-spanning segment; the sequence is FFRDLLSWVVPALIFVAVFLY. Residues 121–615 are Cytoplasmic-facing; sequence FSRKFAEKGG…APQRERDLSV (495 aa). Position 195-202 (195-202) interacts with ATP; that stretch reads GPPGTGKT. H418 lines the Zn(2+) pocket. E419 is an active-site residue. H422 and D495 together coordinate Zn(2+).

It in the central section; belongs to the AAA ATPase family. This sequence in the C-terminal section; belongs to the peptidase M41 family. In terms of assembly, homohexamer. The cofactor is Zn(2+).

The protein resides in the cell inner membrane. Acts as a processive, ATP-dependent zinc metallopeptidase for both cytoplasmic and membrane proteins. Plays a role in the quality control of integral membrane proteins. This is ATP-dependent zinc metalloprotease FtsH 2 from Bdellovibrio bacteriovorus (strain ATCC 15356 / DSM 50701 / NCIMB 9529 / HD100).